A 407-amino-acid polypeptide reads, in one-letter code: E3 ubiquitin-protein ligase TRIM13 (407 aa).

The RING-type zinc-finger motif lies at 10 to 58 (CPICCSLFDDPRVLPCSHNFCKKCLEGILEGSVRNSLWRPAPFKCPTCR). The B box-type zinc-finger motif lies at 89-131 (PKMPVCKGHLGQPLNIFCLTDMQLICGICATRGEHTKHVFCSI). Zn(2+)-binding residues include Cys-94, His-97, Cys-117, and His-123. Positions 172-200 (LQLLTKDSDKVKEFFEKLQHTLDQKKNEI) form a coiled coil. Residues 317 to 337 (LFLLILLLGLVIVFGPTMFLE) form a helical membrane-spanning segment.

This sequence belongs to the TRIM/RBCC family. In terms of assembly, interacts (via C-terminal domain) with VCP. Interacts with AKT1; the interaction ubiquitinates AKT1 and leads to its proteasomal degradation. Interacts with MDM2; the interaction ubiquitinates AKT1 and leads to its proteasomal degradation. Interacts with p62/SQSTM1. Interacts with TRAF6. Interacts with IKBKG/NEMO. In terms of processing, auto-ubiquitinated; requires the RING-type zinc finger. Auto-polyubiquitination leads to proteasomal degradation.

The protein localises to the endoplasmic reticulum membrane. The catalysed reaction is S-ubiquitinyl-[E2 ubiquitin-conjugating enzyme]-L-cysteine + [acceptor protein]-L-lysine = [E2 ubiquitin-conjugating enzyme]-L-cysteine + N(6)-ubiquitinyl-[acceptor protein]-L-lysine.. It functions in the pathway protein modification; protein ubiquitination. Functionally, endoplasmic reticulum (ER) membrane anchored E3 ligase involved in the retrotranslocation and turnover of membrane and secretory proteins from the ER through a set of processes named ER-associated degradation (ERAD). This process acts on misfolded proteins as well as in the regulated degradation of correctly folded proteins. Enhances ionizing radiation-induced p53/TP53 stability and apoptosis via ubiquitinating MDM2 and AKT1 and decreasing AKT1 kinase activity through MDM2 and AKT1 proteasomal degradation. Regulates ER stress-induced autophagy, and may act as a tumor suppressor. Also plays a role in innate immune response by stimulating NF-kappa-B activity in the TLR2 signaling pathway. Ubiquitinates TRAF6 via the 'Lys-29'-linked polyubiquitination chain resulting in NF-kappa-B activation. Participates as well in T-cell receptor-mediated NF-kappa-B activation. In the presence of TNF, modulates the IKK complex by regulating IKBKG/NEMO ubiquitination leading to the repression of NF-kappa-B. In Homo sapiens (Human), this protein is E3 ubiquitin-protein ligase TRIM13 (TRIM13).